We begin with the raw amino-acid sequence, 235 residues long: Large ribosomal subunit protein uL1 (235 aa).

It belongs to the universal ribosomal protein uL1 family. As to quaternary structure, part of the 50S ribosomal subunit.

In terms of biological role, binds directly to 23S rRNA. The L1 stalk is quite mobile in the ribosome, and is involved in E site tRNA release. Its function is as follows. Protein L1 is also a translational repressor protein, it controls the translation of the L11 operon by binding to its mRNA. The polypeptide is Large ribosomal subunit protein uL1 (Fusobacterium nucleatum subsp. nucleatum (strain ATCC 25586 / DSM 15643 / BCRC 10681 / CIP 101130 / JCM 8532 / KCTC 2640 / LMG 13131 / VPI 4355)).